We begin with the raw amino-acid sequence, 257 residues long: 3-methyl-2-oxobutanoate hydroxymethyltransferase (257 aa).

Mg(2+) contacts are provided by aspartate 42 and aspartate 86. 3-methyl-2-oxobutanoate-binding positions include 42-43, aspartate 86, and lysine 116; that span reads DS. Glutamate 118 lines the Mg(2+) pocket. Glutamate 185 functions as the Proton acceptor in the catalytic mechanism.

The protein belongs to the PanB family. In terms of assembly, homodecamer; pentamer of dimers. Requires Mg(2+) as cofactor.

Its subcellular location is the cytoplasm. The catalysed reaction is 3-methyl-2-oxobutanoate + (6R)-5,10-methylene-5,6,7,8-tetrahydrofolate + H2O = 2-dehydropantoate + (6S)-5,6,7,8-tetrahydrofolate. It functions in the pathway cofactor biosynthesis; (R)-pantothenate biosynthesis; (R)-pantoate from 3-methyl-2-oxobutanoate: step 1/2. In terms of biological role, catalyzes the reversible reaction in which hydroxymethyl group from 5,10-methylenetetrahydrofolate is transferred onto alpha-ketoisovalerate to form ketopantoate. The protein is 3-methyl-2-oxobutanoate hydroxymethyltransferase of Prochlorococcus marinus (strain MIT 9312).